The primary structure comprises 350 residues: MNELDSLVESARQRFAQSTSPADLENAKAQFLGKSGRVTELMKGMAQLCVAEKKTRGAAINLAKQAIEAALNARRQALADAQLQQQLTADALDVSLPGRQRGQGGLHPVSLTLERIEGLFGSMGFDVADGPEIETDWFNFTALNTPEDHPARSMHDTFYVEGGTAGAPNLLRTHTSPMQIRHAVQHVKAHRAALDAGQPMPEIRVIAPGRAYRIDSDATHSPMFHQCEGLWIGENVGFKDLKVIFTGFCRRFFESDDLVLRFRPSFFPFTEPSAEIDIRFQTGPLAGRWLEVAGSGQVHPNVVRNMGLDPEKYIGFAFGMGLDRLTMLRYGVSDLRLFFDGDIRFLSQFR.

Glu271 contacts Mg(2+).

The protein belongs to the class-II aminoacyl-tRNA synthetase family. Phe-tRNA synthetase alpha subunit type 1 subfamily. Tetramer of two alpha and two beta subunits. Mg(2+) is required as a cofactor.

Its subcellular location is the cytoplasm. It carries out the reaction tRNA(Phe) + L-phenylalanine + ATP = L-phenylalanyl-tRNA(Phe) + AMP + diphosphate + H(+). This chain is Phenylalanine--tRNA ligase alpha subunit, found in Verminephrobacter eiseniae (strain EF01-2).